Reading from the N-terminus, the 893-residue chain is UPF0182 protein CLM_0018 (893 aa).

Helical transmembrane passes span I9–I29, A49–Y69, L94–Y114, V154–E174, L202–W222, F246–V266, and V273–L293.

It belongs to the UPF0182 family.

It localises to the cell membrane. The protein is UPF0182 protein CLM_0018 of Clostridium botulinum (strain Kyoto / Type A2).